Consider the following 231-residue polypeptide: NADH-ubiquinone oxidoreductase chain 4 (231 aa).

Transmembrane regions (helical) follow at residues 1–21 (PIAGSMVLAAILLKLGGYGII), 34–54 (LFIPFIVLALWGATLANLTCL), 61–80 (SLIAYSSISHMGLVVAAVII), 84–106 (WGLSGAMALMIAHGFTSSALFCL), 118–138 (ILILTRGFHNILPMATTWWLL), 156–176 (LLIVSTLFNWCPTTIIMLGLS), and 211–231 (LLMILHIIPLLMISMKPELVI).

Belongs to the complex I subunit 4 family.

It is found in the mitochondrion membrane. The enzyme catalyses a ubiquinone + NADH + 5 H(+)(in) = a ubiquinol + NAD(+) + 4 H(+)(out). Functionally, core subunit of the mitochondrial membrane respiratory chain NADH dehydrogenase (Complex I) that is believed to belong to the minimal assembly required for catalysis. Complex I functions in the transfer of electrons from NADH to the respiratory chain. The immediate electron acceptor for the enzyme is believed to be ubiquinone. The polypeptide is NADH-ubiquinone oxidoreductase chain 4 (MT-ND4) (Hypnale hypnale (Merrem's hump-nosed viper)).